Reading from the N-terminus, the 638-residue chain is Threonine--tRNA ligase (638 aa).

Residues 1–61 (MPNITLPDGS…EADTPLAIVT (61 aa)) enclose the TGS domain. Positions 242 to 533 (DHRKLGRLLD…LIEHYAGALP (292 aa)) are catalytic. Positions 333, 384, and 510 each coordinate Zn(2+).

It belongs to the class-II aminoacyl-tRNA synthetase family. In terms of assembly, homodimer. Zn(2+) serves as cofactor.

Its subcellular location is the cytoplasm. The enzyme catalyses tRNA(Thr) + L-threonine + ATP = L-threonyl-tRNA(Thr) + AMP + diphosphate + H(+). Catalyzes the attachment of threonine to tRNA(Thr) in a two-step reaction: L-threonine is first activated by ATP to form Thr-AMP and then transferred to the acceptor end of tRNA(Thr). Also edits incorrectly charged L-seryl-tRNA(Thr). The protein is Threonine--tRNA ligase of Aromatoleum aromaticum (strain DSM 19018 / LMG 30748 / EbN1) (Azoarcus sp. (strain EbN1)).